We begin with the raw amino-acid sequence, 167 residues long: Small ribosomal subunit protein uS3m (167 aa).

The transit peptide at 1 to 35 (MAWSASVRGLGQRVLACSRELPGAWRTLHTSAVCA) directs the protein to the mitochondrion.

Belongs to the universal ribosomal protein uS3 family. Component of the mitochondrial ribosome small subunit (28S) which comprises a 12S rRNA and about 30 distinct proteins.

It is found in the mitochondrion. The sequence is that of Small ribosomal subunit protein uS3m (Mrps24) from Mus musculus (Mouse).